We begin with the raw amino-acid sequence, 188 residues long: dCTP deaminase (188 aa).

107–112 (KSTYAR) contacts dCTP. Glu-133 functions as the Proton donor/acceptor in the catalytic mechanism. DCTP-binding residues include Gln-152, Tyr-166, and Gln-176.

The protein belongs to the dCTP deaminase family. As to quaternary structure, homotrimer.

The enzyme catalyses dCTP + H2O + H(+) = dUTP + NH4(+). The protein operates within pyrimidine metabolism; dUMP biosynthesis; dUMP from dCTP (dUTP route): step 1/2. Catalyzes the deamination of dCTP to dUTP. This is dCTP deaminase from Sulfurovum sp. (strain NBC37-1).